The sequence spans 356 residues: MFSSVAHLARANPFNAPHLQLVHDVSGPRSPPGPPRRSRHLAAAAVEGYSCEFGSMKYYALCGFGGVLSCGLTHTAVVPLDLVKCRMQVDPQKYKGIFNGFSITLKEDGVRGLAKGWAPTLIGYSMQGLCKFGFYEVFKALYSNILGEENTYLWRTSLYLAASASAEFFADIALAPMEAAKVRIQTQPGYANTLREAVPKMYKEEGLNAFYKGVAPVWMRQIPYTMMKFACFERTVEALYKFVVPKPRSECTKAEQLVVTFVAGYIAGVFCAIVSHPADSVVSVLNKEKGSTASQVLQRLGFRGVWKGLFARIIMIGTLTALQWFIYDSVKVYFRLPRPPPPEMPESLKKKLGLTE.

A mitochondrion-targeting transit peptide spans 1-44; it reads MFSSVAHLARANPFNAPHLQLVHDVSGPRSPPGPPRRSRHLAAA. The Mitochondrial intermembrane portion of the chain corresponds to 45–57; the sequence is AVEGYSCEFGSMK. 3 Solcar repeats span residues 57 to 141, 154 to 238, and 255 to 333; these read KYYA…FKAL, WRTS…TVEA, and EQLV…VKVY. Residues 58-80 form a helical membrane-spanning segment; the sequence is YYALCGFGGVLSCGLTHTAVVPL. The Mitochondrial matrix portion of the chain corresponds to 81–115; it reads DLVKCRMQVDPQKYKGIFNGFSITLKEDGVRGLAK. N6-acetyllysine is present on K93. An N6-methyllysine modification is found at K106. Residues 116–135 traverse the membrane as a helical segment; that stretch reads GWAPTLIGYSMQGLCKFGFY. Topologically, residues 136–155 are mitochondrial intermembrane; sequence EVFKALYSNILGEENTYLWR. Residues 156 to 177 form a helical membrane-spanning segment; the sequence is TSLYLAASASAEFFADIALAPM. At 178 to 212 the chain is on the mitochondrial matrix side; sequence EAAKVRIQTQPGYANTLREAVPKMYKEEGLNAFYK. Residue Y190 is modified to Phosphotyrosine. K203 is subject to N6-acetyllysine. Residues 213 to 232 traverse the membrane as a helical segment; sequence GVAPVWMRQIPYTMMKFACF. At 233 to 255 the chain is on the mitochondrial intermembrane side; it reads ERTVEALYKFVVPKPRSECTKAE. Residues 256–278 traverse the membrane as a helical segment; sequence QLVVTFVAGYIAGVFCAIVSHPA. The Mitochondrial matrix segment spans residues 279–308; sequence DSVVSVLNKEKGSTASQVLQRLGFRGVWKG. Residues 309 to 327 form a helical membrane-spanning segment; sequence LFARIIMIGTLTALQWFIY. Residues 328 to 356 are Mitochondrial intermembrane-facing; it reads DSVKVYFRLPRPPPPEMPESLKKKLGLTE.

It belongs to the mitochondrial carrier (TC 2.A.29) family. Interacts with PPIF; the interaction is impaired by CsA.

It localises to the mitochondrion inner membrane. It carries out the reaction phosphate(in) + H(+)(in) = phosphate(out) + H(+)(out). Inorganic ion transporter that transports phosphate or copper ions across the mitochondrial inner membrane into the matrix compartment. Mediates proton-coupled symport of phosphate ions necessary for mitochondrial oxidative phosphorylation of ADP to ATP. Transports copper ions probably in the form of anionic copper(I) complexes to maintain mitochondrial matrix copper pool and to supply copper for cytochrome C oxidase complex assembly. May also play a role in regulation of the mitochondrial permeability transition pore (mPTP). The protein is Solute carrier family 25 member 3 of Rattus norvegicus (Rat).